The primary structure comprises 193 residues: Xanthine phosphoribosyltransferase (193 aa).

Positions 20 and 27 each coordinate xanthine. Residue 129–133 coordinates 5-phospho-alpha-D-ribose 1-diphosphate; the sequence is ANGKA. A xanthine-binding site is contributed by K157.

The protein belongs to the purine/pyrimidine phosphoribosyltransferase family. Xpt subfamily. Homodimer.

The protein resides in the cytoplasm. It carries out the reaction XMP + diphosphate = xanthine + 5-phospho-alpha-D-ribose 1-diphosphate. Its pathway is purine metabolism; XMP biosynthesis via salvage pathway; XMP from xanthine: step 1/1. Its function is as follows. Converts the preformed base xanthine, a product of nucleic acid breakdown, to xanthosine 5'-monophosphate (XMP), so it can be reused for RNA or DNA synthesis. The chain is Xanthine phosphoribosyltransferase from Bifidobacterium adolescentis (strain ATCC 15703 / DSM 20083 / NCTC 11814 / E194a).